The following is a 339-amino-acid chain: Heat-inducible transcription repressor HrcA (339 aa).

It belongs to the HrcA family.

Its function is as follows. Negative regulator of class I heat shock genes (grpE-dnaK-dnaJ and groELS operons). Prevents heat-shock induction of these operons. The sequence is that of Heat-inducible transcription repressor HrcA from Clostridium perfringens (strain SM101 / Type A).